The sequence spans 81 residues: ATP synthase subunit c, chloroplastic (81 aa).

Helical transmembrane passes span 3–23 (PLIA…ASIG) and 57–77 (LAFM…LLFA).

Belongs to the ATPase C chain family. As to quaternary structure, F-type ATPases have 2 components, F(1) - the catalytic core - and F(0) - the membrane proton channel. F(1) has five subunits: alpha(3), beta(3), gamma(1), delta(1), epsilon(1). F(0) has four main subunits: a(1), b(1), b'(1) and c(10-14). The alpha and beta chains form an alternating ring which encloses part of the gamma chain. F(1) is attached to F(0) by a central stalk formed by the gamma and epsilon chains, while a peripheral stalk is formed by the delta, b and b' chains.

The protein localises to the plastid. It is found in the chloroplast thylakoid membrane. Its function is as follows. F(1)F(0) ATP synthase produces ATP from ADP in the presence of a proton or sodium gradient. F-type ATPases consist of two structural domains, F(1) containing the extramembraneous catalytic core and F(0) containing the membrane proton channel, linked together by a central stalk and a peripheral stalk. During catalysis, ATP synthesis in the catalytic domain of F(1) is coupled via a rotary mechanism of the central stalk subunits to proton translocation. Key component of the F(0) channel; it plays a direct role in translocation across the membrane. A homomeric c-ring of between 10-14 subunits forms the central stalk rotor element with the F(1) delta and epsilon subunits. This is ATP synthase subunit c, chloroplastic from Pisum sativum (Garden pea).